A 196-amino-acid chain; its full sequence is Peroxisomal membrane protein 2 (196 aa).

At 1 to 30 (MAPAASKLRAEAGLGPLPRRALSQYLRLLR) the chain is on the cytoplasmic side. The chain crosses the membrane as a helical span at residues 31-51 (LYPVLTKAATSGILSALGNFL). Residues 52–76 (AQLIEKKQKKENCSQKLDVSGPLRY) are Peroxisomal-facing. The helical transmembrane segment at 77–97 (AIYGFFFTGPLGHFFYLLMER) threads the bilayer. Topologically, residues 98–115 (WIPSEVPLAGIKRLLLDR) are cytoplasmic. A helical transmembrane segment spans residues 116-136 (LLFAPAFLSLFFLVMNFLEGQ). Over 137–174 (DTAAFAAKMKSGFWPALRMNWRVWTPVQFININYIPVQ) the chain is Peroxisomal. Residues 175 to 196 (FRVLFANLVALFWYAYLASLGK) form a helical membrane-spanning segment.

It belongs to the peroxisomal membrane protein PXMP2/4 family. Interacts with PEX19 and SIVA1.

Its subcellular location is the peroxisome membrane. Seems to be involved in pore-forming activity and may contribute to the unspecific permeability of the peroxisomal membrane. In Bos taurus (Bovine), this protein is Peroxisomal membrane protein 2 (PXMP2).